Here is a 237-residue protein sequence, read N- to C-terminus: Uridylate kinase (237 aa).

Residue Lys12–Gly15 coordinates ATP. Gly53 serves as a coordination point for UMP. 2 residues coordinate ATP: Gly54 and Arg58. Residues Asp73 and Thr134–Thr141 each bind UMP. ATP-binding residues include Thr161, Tyr167, and Asp170.

The protein belongs to the UMP kinase family. In terms of assembly, homohexamer.

It is found in the cytoplasm. It carries out the reaction UMP + ATP = UDP + ADP. It functions in the pathway pyrimidine metabolism; CTP biosynthesis via de novo pathway; UDP from UMP (UMPK route): step 1/1. Its activity is regulated as follows. Inhibited by UTP. Functionally, catalyzes the reversible phosphorylation of UMP to UDP. In Rhizorhabdus wittichii (strain DSM 6014 / CCUG 31198 / JCM 15750 / NBRC 105917 / EY 4224 / RW1) (Sphingomonas wittichii), this protein is Uridylate kinase.